We begin with the raw amino-acid sequence, 257 residues long: uncharacterized protein (257 aa).

6 helical membrane-spanning segments follow: residues 23–43 (VLTD…EGLL), 79–99 (FIFI…VLGA), 131–151 (TFGI…AFSV), 158–178 (FAVS…ILMM), 199–219 (AFVL…HYEM), and 221–241 (HSVF…IHYI).

It belongs to the TerC family.

Its subcellular location is the cell membrane. This is an uncharacterized protein from Bacillus subtilis (strain 168).